The primary structure comprises 502 residues: Lysine--tRNA ligase (502 aa).

2 residues coordinate Mg(2+): glutamate 398 and glutamate 405.

This sequence belongs to the class-II aminoacyl-tRNA synthetase family. As to quaternary structure, homodimer. The cofactor is Mg(2+).

It localises to the cytoplasm. The catalysed reaction is tRNA(Lys) + L-lysine + ATP = L-lysyl-tRNA(Lys) + AMP + diphosphate. This Thermosipho africanus (strain TCF52B) protein is Lysine--tRNA ligase.